A 379-amino-acid chain; its full sequence is Putative zinc metalloprotease BR1156/BS1330_I1152 (379 aa).

Position 33 (H33) interacts with Zn(2+). The active site involves E34. A Zn(2+)-binding site is contributed by H37. 4 helical membrane-spanning segments follow: residues 39 to 61 (LVAR…ELLG), 122 to 144 (VFAG…FALY), 305 to 327 (FDWL…LFPL), and 355 to 377 (IFYR…NDLF). The region spanning 133–208 (TIAIFSVFFA…LNFTVERDGK (76 aa)) is the PDZ domain.

The protein belongs to the peptidase M50B family. Zn(2+) is required as a cofactor.

It is found in the cell inner membrane. The protein is Putative zinc metalloprotease BR1156/BS1330_I1152 of Brucella suis biovar 1 (strain 1330).